Consider the following 117-residue polypeptide: Large ribosomal subunit protein uL18 (117 aa).

This sequence belongs to the universal ribosomal protein uL18 family. In terms of assembly, part of the 50S ribosomal subunit; part of the 5S rRNA/L5/L18/L25 subcomplex. Contacts the 5S and 23S rRNAs.

Functionally, this is one of the proteins that bind and probably mediate the attachment of the 5S RNA into the large ribosomal subunit, where it forms part of the central protuberance. This chain is Large ribosomal subunit protein uL18, found in Methylococcus capsulatus (strain ATCC 33009 / NCIMB 11132 / Bath).